The chain runs to 1430 residues: rRNA biogenesis protein RRP5 (1430 aa).

S1 motif domains follow at residues 74 to 160 (DMLV…LSLK), 176 to 238 (GFIF…CTCV), 261 to 329 (GSIV…LTLN), 447 to 511 (GDLV…VSNR), 531 to 592 (GNVY…LTLP), and 697 to 771 (QVGD…VSAK). Residues 1041–1145 (KITNGQKKTQ…AKEKAKAEIK (105 aa)) form a disordered region. Over residues 1043 to 1053 (TNGQKKTQPLT) the composition is skewed to polar residues. 2 stretches are compositionally biased toward basic and acidic residues: residues 1057 to 1082 (VKEK…KSET) and 1135 to 1145 (SAKEKAKAEIK). A coiled-coil region spans residues 1119-1157 (LNVAETQKNAAKKKRLSAKEKAKAEIKEEQRLREIEERN). 6 HAT repeats span residues 1161–1193 (KARL…FLLS), 1195–1232 (TEIE…MELV), 1265–1297 (KRKD…AYFW), 1299–1333 (GKSD…LYAK), 1335–1367 (DNND…MLIK), and 1369–1404 (GLID…LEEN).

The protein resides in the nucleus. The protein localises to the nucleolus. Functionally, involved in rRNA processing or maturation during ribosome biogenesis. The polypeptide is rRNA biogenesis protein RRP5 (Drosophila melanogaster (Fruit fly)).